The sequence spans 352 residues: Homocitrate synthase, omega subunit (352 aa).

The protein belongs to the alpha-IPM synthase/homocitrate synthase family. In terms of assembly, heterodimer of an alpha and an omega chain.

The catalysed reaction is acetyl-CoA + 2-oxoglutarate + H2O = (2R)-homocitrate + CoA + H(+). In terms of biological role, this protein is a Fe-Mo-cofactor biosynthetic component. The chain is Homocitrate synthase, omega subunit (nifV-OMEGA) from Clostridium pasteurianum.